A 63-amino-acid polypeptide reads, in one-letter code: Small ribosomal subunit protein eS17 (63 aa).

This sequence belongs to the eukaryotic ribosomal protein eS17 family.

This chain is Small ribosomal subunit protein eS17, found in Methanococcus maripaludis (strain C6 / ATCC BAA-1332).